The following is a 467-amino-acid chain: MSSRTVIRGGLVITASDEIHADVLIEDGRVAALAATGTPAAEAFTAENVIDASGKYVIPGGVDGHTHMEMPFGGTYAADTFETGTRAAAWGGTTTIVDFAIQSVGHSLREGLDAWHAKAEGNCAIDYGFHMIVSDVNQETLKEMDLLVEEGVTSFKQFMAYPGVFYSDDGQILRAMQRAAENGGLIMMHAENGIAIDVLVEQALARGETDPRFHGEVRKALLEAEATHRAIRLAQVAGAPLYVVHVSATEAVAELTRARDEGLPVFGETCPQYLFLSTDNLAEPDFEGAKYVCSTPLRPKEHQAALWRGLRTNDLQVVSTDHCPFCFSGQKELGRGDFSRIPNGMPGVENRMDLLHQAVVEGHIGRRRWIEIACATPARMFGLYPKKGTIAPGADADIVVYDPHAEQVISAETHHMNVDYSAYEGRRITGRVETVLSRGEPVVTEREYTGRKGHGAYTPRATCQYLT.

His65, His67, and Lys156 together coordinate Zn(2+). Lys156 carries the post-translational modification N6-carboxylysine. Tyr161 is a binding site for substrate. Positions 189 and 245 each coordinate Zn(2+). Ser294 contacts substrate. Asp321 provides a ligand contact to Zn(2+). Residue Asn343 coordinates substrate.

This sequence belongs to the metallo-dependent hydrolases superfamily. Hydantoinase/dihydropyrimidinase family. Homotetramer. Zn(2+) serves as cofactor. Post-translationally, carboxylation allows a single lysine to coordinate two zinc ions.

Catalyzes the stereospecific hydrolysis of the cyclic amide bond of D-hydantoin derivatives. This Streptomyces coelicolor (strain ATCC BAA-471 / A3(2) / M145) protein is D-hydantoinase (hyuA).